The following is a 542-amino-acid chain: Chaperonin GroEL (542 aa).

ATP-binding positions include 29–32 (TLGP), 86–90 (DGTTT), Gly-413, 476–478 (NAA), and Asp-492. The segment at 521-542 (QPDENGPAAGPDMGMGGMGGMM) is disordered. Gly residues predominate over residues 533 to 542 (MGMGGMGGMM).

The protein belongs to the chaperonin (HSP60) family. Forms a cylinder of 14 subunits composed of two heptameric rings stacked back-to-back. Interacts with the co-chaperonin GroES.

The protein resides in the cytoplasm. It catalyses the reaction ATP + H2O + a folded polypeptide = ADP + phosphate + an unfolded polypeptide.. In terms of biological role, together with its co-chaperonin GroES, plays an essential role in assisting protein folding. The GroEL-GroES system forms a nano-cage that allows encapsulation of the non-native substrate proteins and provides a physical environment optimized to promote and accelerate protein folding. This chain is Chaperonin GroEL, found in Listeria innocua serovar 6a (strain ATCC BAA-680 / CLIP 11262).